The primary structure comprises 61 residues: Photosystem II reaction center protein K (61 aa).

Positions methionine 1–alanine 24 are excised as a propeptide. A helical transmembrane segment spans residues methionine 40 to phenylalanine 60.

It belongs to the PsbK family. In terms of assembly, PSII is composed of 1 copy each of membrane proteins PsbA, PsbB, PsbC, PsbD, PsbE, PsbF, PsbH, PsbI, PsbJ, PsbK, PsbL, PsbM, PsbT, PsbX, PsbY, PsbZ, Psb30/Ycf12, at least 3 peripheral proteins of the oxygen-evolving complex and a large number of cofactors. It forms dimeric complexes.

The protein resides in the plastid. Its subcellular location is the chloroplast thylakoid membrane. One of the components of the core complex of photosystem II (PSII). PSII is a light-driven water:plastoquinone oxidoreductase that uses light energy to abstract electrons from H(2)O, generating O(2) and a proton gradient subsequently used for ATP formation. It consists of a core antenna complex that captures photons, and an electron transfer chain that converts photonic excitation into a charge separation. This is Photosystem II reaction center protein K from Citrus sinensis (Sweet orange).